The chain runs to 5289 residues: Mucin-2 (5289 aa).

Residues 1–20 (MGLPLARLAAVCLALSLAGG) form the signal peptide. Serine 21 is modified (phosphoserine). Histidine 34 lines the Cu(2+) pocket. Residues 35 to 207 (NVCSTWGNFH…KINQPDVVCE (173 aa)) enclose the VWFD 1 domain. 29 disulfide bridges follow: cysteine 37-cysteine 169, cysteine 59-cysteine 206, cysteine 67-cysteine 166, cysteine 218-cysteine 255, cysteine 225-cysteine 250, cysteine 237-cysteine 275, cysteine 257-cysteine 263, cysteine 265-cysteine 291, cysteine 295-cysteine 329, cysteine 308-cysteine 321, cysteine 312-cysteine 351, cysteine 331-cysteine 345, cysteine 353-cysteine 375, cysteine 370-cysteine 387, cysteine 373-cysteine 382, cysteine 391-cysteine 528, cysteine 413-cysteine 563, cysteine 435-cysteine 443, cysteine 574-cysteine 619, cysteine 588-cysteine 614, cysteine 601-cysteine 639, cysteine 621-cysteine 627, cysteine 629-cysteine 654, cysteine 661-cysteine 698, cysteine 674-cysteine 688, cysteine 678-cysteine 718, cysteine 700-cysteine 712, cysteine 720-cysteine 742, and cysteine 740-cysteine 749. A Ca(2+)-binding site is contributed by aspartate 49. Methionine 146 and methionine 154 together coordinate Cu(+). Residue glutamate 156 coordinates Cu(2+). Asparagine 163 carries N-linked (GlcNAc...) asparagine glycosylation. Ca(2+) is bound by residues aspartate 171, asparagine 173, leucine 175, and glutamate 180. A Cu(2+)-binding site is contributed by histidine 277. A TIL domain is found at 295-351 (CPGNLVYLESGSPCMDTCSHLEVSSLCEEHRMDGCFCPEGTVYDDIGDSGCVPVSQC). Position 324 (histidine 324) interacts with Cu(2+). Residue methionine 326 coordinates Cu(+). A VWFD 2 domain is found at 389–564 (GTCALEGGSH…NTWKAQSSCH (176 aa)). Aspartate 403 contributes to the Ca(2+) binding site. Asparagine 423 carries an N-linked (GlcNAc...) asparagine glycan. Residues asparagine 530, asparagine 532, leucine 534, aspartate 537, and aspartate 538 each contribute to the Ca(2+) site. Asparagine 670 is a glycosylation site (N-linked (GlcNAc...) asparagine). N-linked (GlcNAc...) asparagine glycosylation occurs at asparagine 770. Disulfide bonds link cysteine 784–cysteine 820, cysteine 802–cysteine 814, cysteine 822–cysteine 844, cysteine 839–cysteine 856, cysteine 842–cysteine 851, cysteine 860–cysteine 992, cysteine 882–cysteine 1027, cysteine 891–cysteine 989, cysteine 909–cysteine 916, cysteine 1037–cysteine 1080, cysteine 1051–cysteine 1075, cysteine 1062–cysteine 1102, cysteine 1082–cysteine 1090, cysteine 1092–cysteine 1117, cysteine 1108–cysteine 1137, cysteine 1121–cysteine 1163, cysteine 1145–cysteine 1187, cysteine 1167–cysteine 1181, cysteine 1189–cysteine 1213, cysteine 1208–cysteine 1238, and cysteine 1211–cysteine 1221. The region spanning 858–1028 (GTCSIYGSGH…NSWKEAPTCP (171 aa)) is the VWFD 3 domain. Residue aspartate 872 participates in Ca(2+) binding. Asparagine 894 is a glycosylation site (N-linked (GlcNAc...) asparagine). Ca(2+) contacts are provided by asparagine 994, aspartate 996, arginine 998, asparagine 1001, and aspartate 1002. 2 N-linked (GlcNAc...) asparagine glycosylation sites follow: asparagine 1139 and asparagine 1154. N-linked (GlcNAc...) asparagine glycans are attached at residues asparagine 1215, asparagine 1230, and asparagine 1246. O-linked (GalNAc) threonine glycosylation is found at threonine 1266, threonine 1267, threonine 1269, threonine 1270, threonine 1272, threonine 1275, threonine 1276, threonine 1281, threonine 1282, and threonine 1287. Residues serine 1291 and serine 1292 are each glycosylated (O-linked (GalNAc) serine). Threonine 1293 carries O-linked (GalNAc) threonine glycosylation. O-linked (GalNAc) serine glycosylation is present at serine 1296. Threonine 1297 carries an O-linked (GalNAc) threonine glycan. Ca(2+) is bound by residues asparagine 1310, aspartate 1312, histidine 1313, serine 1316, aspartate 1319, glycine 1321, aspartate 1322, glutamate 1324, aspartate 1381, and tyrosine 1382. 5 stretches are compositionally biased toward pro residues: residues 1399–1411 (PSPPTTTPSPPPT), 1419–1510 (TTTP…PITP), 1520–1549 (TTTPSPPTTTTTTPPPTTTPSPPTTTPITP), 1559–1628 (TTTP…PITP), and 1638–1679 (TTTP…PPTT). Residues 1399–1773 (PSPPTTTPSP…SITPPTFSPF (375 aa)) are disordered. 6 consecutive repeat copies span residues 1401–1416 (PPTTTPSPPPTSTTTL), 1417–1432 (PPTTTPSPPTTTTTTP), 1433–1448 (PPTTTPSPPITTTTTP), 1449–1464 (PPTTTPSPPISTTTTP), 1465–1471 (PPTTTPS), and 1472–1478 (PPTTTPS). The tract at residues 1401-1747 (PPTTTPSPPP…SPPTTTMTTL (347 aa)) is approximate repeats. The 7A repeat unit spans residues 1479-1494 (PPTTTPSPPTTTTTTP). One copy of the 7B repeat lies at 1495-1517 (PPTTTPSPPTTTPITPPASTTTL). The 8A repeat unit spans residues 1518–1533 (PPTTTPSPPTTTTTTP). An 8B repeat occupies 1534 to 1556 (PPTTTPSPPTTTPITPPTSTTTL). Residues 1557–1572 (PPTTTPSPPPTTTTTP) form a 9A repeat. The stretch at 1573–1596 (PPTTTPSPPTTTTPSPPTITTTTP) is one 9B repeat. Residues 1597-1612 (PPTTTPSPPTTTTTTP) form a 10A repeat. Residues 1613 to 1635 (PPTTTPSPPTTTPITPPTSTTTL) form a 10B repeat. The stretch at 1636 to 1651 (PPTTTPSPPPTTTTTP) is one 11A repeat. Residues 1652–1675 (PPTTTPSPPTTTTPSPPITTTTTP) form an 11B repeat. 5 repeat units span residues 1676–1683 (PPTTTPSS), 1684–1699 (PITTTPSPPTTTMTTP), 1700–1715 (SPTTTPSSPITTTTTP), 1716–1731 (SSTTTPSPPPTTMTTP), and 1732–1747 (SPTTTPSPPTTTMTTL). Low complexity-rich tracts occupy residues 1680-1720 (TPSS…STTT) and 1741-1759 (TTTMTTLPPTTTSSPLTTT). Residues 1760–1770 (PLPPSITPPTF) are compositionally biased toward pro residues. 2 N-linked (GlcNAc...) asparagine glycosylation sites follow: asparagine 1787 and asparagine 1820. Composition is skewed to low complexity over residues 1885-2158 (MTTT…TMVT), 2165-4238 (GTQT…QTPT), 4269-4315 (TTVT…STAP), and 4329-4430 (STPQ…PSII). Disordered stretches follow at residues 1885–4238 (MTTT…QTPT) and 4269–4430 (TTVT…PSII). N-linked (GlcNAc...) asparagine glycosylation is found at asparagine 4449, asparagine 4461, asparagine 4472, and asparagine 4483. The disordered stretch occupies residues 4492 to 4524 (PTPTPSKSTPTPSKPSSTPSKPTPGTKPPECPD). A compositionally biased stretch (low complexity) spans 4496 to 4511 (PSKSTPTPSKPSSTPS). Residues 4512 to 4522 (KPTPGTKPPEC) show a composition bias toward pro residues. 3 N-linked (GlcNAc...) asparagine glycosylation sites follow: asparagine 4532, asparagine 4548, and asparagine 4612. The region spanning 4589–4772 (CYCTGWGDPH…VNDPSKPHCP (184 aa)) is the VWFD 4 domain. 3 cysteine pairs are disulfide-bonded: cysteine 4591/cysteine 4732, cysteine 4613/cysteine 4771, and cysteine 4637/cysteine 4645. 2 N-linked (GlcNAc...) asparagine glycosylation sites follow: asparagine 4726 and asparagine 4737. Positions 4770-4795 (HCPHSSSTTKRPAVTVPGGGKTTPHK) are disordered. N-linked (GlcNAc...) asparagine glycans are attached at residues asparagine 4862, asparagine 4897, asparagine 4991, asparagine 4998, asparagine 5065, asparagine 5080, asparagine 5129, asparagine 5148, and asparagine 5179. In terms of domain architecture, VWFC 1 spans 4927–4996 (CVGPDNVPRE…DTCCNITVCK (70 aa)). The VWFC 2 domain occupies 5034–5101 (GVCVHGNAEY…APGECCKKCE (68 aa)). 4 cysteine pairs are disulfide-bonded: cysteine 5185/cysteine 5232, cysteine 5199/cysteine 5246, cysteine 5208/cysteine 5262, and cysteine 5212/cysteine 5264. A CTCK domain is found at 5185–5270 (CSTVPVTTEV…SCQCQDTVCG (86 aa)).

Homomultimer; disulfide-linked. The N- and C-terminus mediate their assembly into higher order structures to form filaments. The CTCK domains of two polypeptides associate in the endoplasmic reticulum to generate intermolecularly disulfide-bonded dimers. These dimers progress to the Golgi apparatus, which is a more acidic environment than the endoplasmic reticulum. Under acidic conditions, the N-termini form non-covalent intermolecular interactions that juxtapose assemblies of the third VWD domain (VWD3) from different CTCK-linked dimers. The VWD3 assemblies then become disulfide bonded to one another to produce long, disulfide-linked polymers that remain highly compact until secretion. Interacts with FCGBP. Interacts with AGR2; disulfide-linked. As to quaternary structure, (Microbial infection) Interacts in vitro with L.monocytogenes internalin proteins InlB, InlC and InlJ; for InlC binding is slightly better at pH 5.5, (the pH of the intestine) than at pH 7.4. O-glycosylated. O-glycosylation is required for mucin assembly. Goblet cells synthesize two forms of mucin that differ in branched chain O-glycosylation and the site of production in the colon. Post-translationally, may undergo proteolytic cleavage in the outer mucus layer of the colon, contributing to the expanded volume and loose nature of this layer which allows for bacterial colonization in contrast to the inner mucus layer which is dense and devoid of bacteria. In terms of processing, at low pH of 6 and under, undergoes autocatalytic cleavage in vitro in the N-terminal region of the fourth VWD domain. It is likely that this also occurs in vivo and is triggered by the low pH of the late secretory pathway. In terms of tissue distribution, colon, small intestine, colonic tumors, bronchus, cervix and gall bladder.

Its subcellular location is the secreted. Coats the epithelia of the intestines and other mucus membrane-containing organs to provide a protective, lubricating barrier against particles and infectious agents at mucosal surfaces. Major constituent of the colon mucus, which is mainly formed by large polymeric networks of MUC2 secreted by goblet cells that cover the exposed surfaces of intestine. MUC2 networks form hydrogels that guard the underlying epithelium from pathogens and other hazardous matter entering from the outside world, while permitting nutrient absorption and gas exchange. Acts as a divalent copper chaperone that protects intestinal cells from copper toxicity and facilitates nutritional copper unptake into cells. Binds both Cu(2+) and its reduced form, Cu(1+), at two juxtaposed binding sites: Cu(2+), once reduced to Cu(1+) by vitamin C (ascorbate) or other dietary antioxidants, transits to the other binding site. MUC2-bound Cu(1+) is protected from oxidation in aerobic environments, and can be released for nutritional delivery to cells. Mucin gels store antimicrobial molecules that participate in innate immunity. Mucin glycoproteins also house and feed the microbiome, lubricate tissue surfaces, and may facilitate the removal of contaminants and waste products from the body. Goblet cells synthesize two forms of MUC2 mucin that differ in branched chain O-glycosylation and the site of production in the colon: a (1) 'thick' mucus that wraps the microbiota to form fecal pellets is produced in the proximal, ascending colon. 'Thick' mucus transits along the descending colon and is lubricated by a (2) 'thin' MUC2 mucus produced in the distal colon which adheres to the 'thick' mucus. The chain is Mucin-2 from Homo sapiens (Human).